The following is a 578-amino-acid chain: Arginine--tRNA ligase (578 aa).

A 'HIGH' region motif is present at residues 127 to 137; sequence PNLAKEMHVGH.

This sequence belongs to the class-I aminoacyl-tRNA synthetase family. Monomer.

It is found in the cytoplasm. It carries out the reaction tRNA(Arg) + L-arginine + ATP = L-arginyl-tRNA(Arg) + AMP + diphosphate. The polypeptide is Arginine--tRNA ligase (Pseudomonas fluorescens (strain Pf0-1)).